Consider the following 395-residue polypeptide: Putative 8-amino-7-oxononanoate synthase (395 aa).

R23 is a binding site for substrate. 110–111 is a pyridoxal 5'-phosphate binding site; it reads GY. Residue H135 coordinates substrate. Pyridoxal 5'-phosphate is bound by residues S182, 207–210, and 239–242; these read DEAH and TFSK. N6-(pyridoxal phosphate)lysine is present on K242. Residue T356 participates in substrate binding.

It belongs to the class-II pyridoxal-phosphate-dependent aminotransferase family. BioF subfamily. Homodimer. Pyridoxal 5'-phosphate serves as cofactor.

The catalysed reaction is 6-carboxyhexanoyl-[ACP] + L-alanine + H(+) = (8S)-8-amino-7-oxononanoate + holo-[ACP] + CO2. It functions in the pathway cofactor biosynthesis; biotin biosynthesis. Functionally, catalyzes the decarboxylative condensation of pimeloyl-[acyl-carrier protein] and L-alanine to produce 8-amino-7-oxononanoate (AON), [acyl-carrier protein], and carbon dioxide. This is Putative 8-amino-7-oxononanoate synthase (bioF) from Bacillus cereus (strain B4264).